The primary structure comprises 310 residues: Phosphoribosylaminoimidazole-succinocarboxamide synthase (310 aa).

The protein belongs to the SAICAR synthetase family.

The catalysed reaction is 5-amino-1-(5-phospho-D-ribosyl)imidazole-4-carboxylate + L-aspartate + ATP = (2S)-2-[5-amino-1-(5-phospho-beta-D-ribosyl)imidazole-4-carboxamido]succinate + ADP + phosphate + 2 H(+). It functions in the pathway purine metabolism; IMP biosynthesis via de novo pathway; 5-amino-1-(5-phospho-D-ribosyl)imidazole-4-carboxamide from 5-amino-1-(5-phospho-D-ribosyl)imidazole-4-carboxylate: step 1/2. This chain is Phosphoribosylaminoimidazole-succinocarboxamide synthase, found in Xanthomonas campestris pv. campestris (strain B100).